A 95-amino-acid polypeptide reads, in one-letter code: Protein TusB (95 aa).

The protein belongs to the DsrH/TusB family. In terms of assembly, heterohexamer, formed by a dimer of trimers. The hexameric TusBCD complex contains 2 copies each of TusB, TusC and TusD. The TusBCD complex interacts with TusE.

It localises to the cytoplasm. In terms of biological role, part of a sulfur-relay system required for 2-thiolation of 5-methylaminomethyl-2-thiouridine (mnm(5)s(2)U) at tRNA wobble positions. This chain is Protein TusB, found in Yersinia enterocolitica serotype O:8 / biotype 1B (strain NCTC 13174 / 8081).